A 399-amino-acid polypeptide reads, in one-letter code: Elongation factor Tu (399 aa).

The tr-type G domain occupies 10 to 209; it reads KPHVNIGTIG…EVDRYIPTPE (200 aa). Residues 19-26 are G1; it reads GHVDHGKT. A GTP-binding site is contributed by 19–26; that stretch reads GHVDHGKT. Thr-26 contacts Mg(2+). A G2 region spans residues 60 to 64; sequence GITIA. Residues 81-84 form a G3 region; it reads DCPG. Residues 81 to 85 and 136 to 139 each bind GTP; these read DCPGH and NKED. The tract at residues 136-139 is G4; it reads NKED. The segment at 174–176 is G5; it reads SAL.

Belongs to the TRAFAC class translation factor GTPase superfamily. Classic translation factor GTPase family. EF-Tu/EF-1A subfamily. In terms of assembly, monomer.

The protein resides in the cytoplasm. The catalysed reaction is GTP + H2O = GDP + phosphate + H(+). In terms of biological role, GTP hydrolase that promotes the GTP-dependent binding of aminoacyl-tRNA to the A-site of ribosomes during protein biosynthesis. This Wolinella succinogenes (strain ATCC 29543 / DSM 1740 / CCUG 13145 / JCM 31913 / LMG 7466 / NCTC 11488 / FDC 602W) (Vibrio succinogenes) protein is Elongation factor Tu.